Here is a 426-residue protein sequence, read N- to C-terminus: uncharacterized protein (426 aa).

Residues 23–42 form a disordered region; that stretch reads ENPRPTNNPSTSHPSDSYST. Residues 26 to 42 are compositionally biased toward polar residues; that stretch reads RPTNNPSTSHPSDSYST.

It belongs to the serpin family.

This is an uncharacterized protein from Thermococcus kodakarensis (strain ATCC BAA-918 / JCM 12380 / KOD1) (Pyrococcus kodakaraensis (strain KOD1)).